A 318-amino-acid chain; its full sequence is Dual specificity protein phosphatase 2 (318 aa).

Positions Glu27–Ser148 constitute a Rhodanese domain. Positions Gly176–Cys317 constitute a Tyrosine-protein phosphatase domain. Cys261 serves as the catalytic Phosphocysteine intermediate.

This sequence belongs to the protein-tyrosine phosphatase family. Non-receptor class dual specificity subfamily. Interacts with MAPK14; this interaction does not lead to catalytic activation of DUSP2 and dephosphrylation of MAPK14. In terms of tissue distribution, in hematopoietic tissues such as spleen and thymus.

It is found in the nucleus. The enzyme catalyses O-phospho-L-tyrosyl-[protein] + H2O = L-tyrosyl-[protein] + phosphate. It carries out the reaction O-phospho-L-threonyl-[protein] + H2O = L-threonyl-[protein] + phosphate. In terms of biological role, dephosphorylates both phosphorylated Thr and Tyr residues in MAPK1, and dephosphorylation of phosphotyrosine is slightly faster than that of phosphothreonine. Can dephosphorylate MAPK1. This is Dual specificity protein phosphatase 2 from Mus musculus (Mouse).